The chain runs to 447 residues: N-succinylarginine dihydrolase (447 aa).

Residues 19-28 (AGLSFGNEAS), Asn-110, and 137-138 (HR) contribute to the substrate site. Glu-174 is an active-site residue. Arg-212 provides a ligand contact to substrate. His-248 is a catalytic residue. Substrate contacts are provided by Asp-250 and Asn-359. Cys-365 functions as the Nucleophile in the catalytic mechanism.

The protein belongs to the succinylarginine dihydrolase family. Homodimer.

The catalysed reaction is N(2)-succinyl-L-arginine + 2 H2O + 2 H(+) = N(2)-succinyl-L-ornithine + 2 NH4(+) + CO2. It participates in amino-acid degradation; L-arginine degradation via AST pathway; L-glutamate and succinate from L-arginine: step 2/5. In terms of biological role, catalyzes the hydrolysis of N(2)-succinylarginine into N(2)-succinylornithine, ammonia and CO(2). The chain is N-succinylarginine dihydrolase from Citrobacter koseri (strain ATCC BAA-895 / CDC 4225-83 / SGSC4696).